The following is a 449-amino-acid chain: Trigger factor (449 aa).

Residues glycine 173–proline 258 enclose the PPIase FKBP-type domain.

The protein belongs to the FKBP-type PPIase family. Tig subfamily.

It localises to the cytoplasm. It carries out the reaction [protein]-peptidylproline (omega=180) = [protein]-peptidylproline (omega=0). Its function is as follows. Involved in protein export. Acts as a chaperone by maintaining the newly synthesized protein in an open conformation. Functions as a peptidyl-prolyl cis-trans isomerase. This Burkholderia thailandensis (strain ATCC 700388 / DSM 13276 / CCUG 48851 / CIP 106301 / E264) protein is Trigger factor.